A 278-amino-acid chain; its full sequence is Serine protease 57 (278 aa).

Positions 1 to 31 are cleaved as a signal peptide; that stretch reads MVPGTGGGRDCLTLVVATALTQLLWLPGCCG. The Peptidase S1 domain maps to 34 to 263; sequence IVGGHEVKPH…FVSWIWDVVR (230 aa). Cys-59 and Cys-75 are oxidised to a cystine. Active-site charge relay system residues include His-74 and Asp-122. Asn-129 carries an N-linked (GlcNAc...) asparagine glycan. 3 disulfide bridges follow: Cys-157–Cys-224, Cys-188–Cys-202, and Cys-214–Cys-239. Catalysis depends on Ser-218, which acts as the Charge relay system.

Belongs to the peptidase S1 family. In terms of processing, after cleavage of the signal peptide, the N-terminus is probably further processed by CTSC. Processing by CTSC is probably required for accumulation in cytoplasmic granules; in the absence of CTSC the protein does not accumulate. N-glycosylated.

Its subcellular location is the cytoplasmic granule lumen. The protein localises to the secreted. Its function is as follows. Serine protease that cleaves preferentially after Arg residues. Can also cleave after citrulline (deimidated arginine) and methylarginine residues. This chain is Serine protease 57 (Prss57), found in Rattus norvegicus (Rat).